The primary structure comprises 518 residues: Serine/threonine-protein kinase UL13 (518 aa).

Residues 1-119 (MDESRRQRPA…QAALTAPPSS (119 aa)) are disordered. The Protein kinase domain maps to 151–518 (PGARSFGGSG…TNPCARHALS (368 aa)). Residues 157-165 (GGSGGYGDV) and Lys176 contribute to the ATP site. The active-site Proton acceptor is the Asp277.

This sequence belongs to the protein kinase superfamily. Ser/Thr protein kinase family. Post-translationally, autophosphorylated.

Its subcellular location is the virion tegument. The protein localises to the host nucleus. It catalyses the reaction L-seryl-[protein] + ATP = O-phospho-L-seryl-[protein] + ADP + H(+). It carries out the reaction L-threonyl-[protein] + ATP = O-phospho-L-threonyl-[protein] + ADP + H(+). Its function is as follows. Multifunctional serine/threonine kinase that plays a role in several processes including egress of virus particles from the nucleus, modulation of the actin cytoskeleton and regulation of viral and cellular gene expression. Regulates the nuclear localization of viral envelopment factors UL34 and UL31, by phosphorylating the US3 kinase, indicating a role in nuclear egress. Disrupts host nuclear lamins, including LMNA and LMNB1. Phosphorylates the viral Fc receptor composed of glycoproteins E (gE) and I (gI). Phosphorylation of glycoprotein E (gE) by UL13 alters its subcellular localization, from the host early endosome to the plasma membrane. Participates in the transcriptional regulation of cellular and viral mRNAs mainly by phosphorylating the viral transcriptional regulator ICP22. Additional substrates have been identified, including UL41, UL49 or host EF1D. This chain is Serine/threonine-protein kinase UL13, found in Homo sapiens (Human).